Consider the following 1580-residue polypeptide: Ras GTPase-activating protein raskol (1580 aa).

S164 carries the phosphoserine modification. T167 carries the phosphothreonine modification. The disordered stretch occupies residues 197–223 (LKRTKSVTKLERTKRGSGGLRGSRSHE). S221 and S224 each carry phosphoserine. The region spanning 233–291 (STIDLSCTGAVGVAPVHQSVLGRRHCFQVRGGPRGERYYSCGSRQERDLWIYSLRKSIA) is the PH domain. The C2 domain occupies 282 to 400 (WIYSLRKSIA…TSRLPCEQWY (119 aa)). Residues 490 to 700 (GLAGAFLTDV…ARMQQFLEII (211 aa)) form the Ras-GAP domain. Disordered stretches follow at residues 764–819 (GMGT…QPQH), 857–892 (LLQQ…HQHP), 904–1023 (AGNQ…SYDD), 1112–1218 (ANHH…QQFG), 1284–1313 (LSGG…YGRL), 1334–1443 (VGYG…LGKS), and 1561–1580 (YETQ…QKPQ). The span at 776 to 805 (ATSSTHSIASENQENRNPGSSGSHAGSNSE) shows a compositional bias: polar residues. Composition is skewed to low complexity over residues 806–818 (QLLP…AQPQ), 857–885 (LLQQ…GHQQ), and 926–939 (SSSL…LLHG). Residues 940-954 (HQQHAHHPQQLHPHH) show a composition bias toward basic residues. Positions 987 to 1020 (TSTPSSTRSRTLPRNGNPNANGNVGSSNNNQSGS) are enriched in low complexity. Residues 1140–1150 (SAKSSHCSSGY) are compositionally biased toward polar residues. Positions 1151-1169 (QSISTNPSPSQSSSPVESQ) are enriched in low complexity. Phosphoserine occurs at positions 1158 and 1164. The span at 1186–1206 (PSYQLQPQTGSSRSSAQSNTH) shows a compositional bias: polar residues. 3 stretches are compositionally biased toward low complexity: residues 1207 to 1216 (QQQQQQQQQQ), 1285 to 1299 (SGGS…ASTS), and 1351 to 1362 (HQQQQNPMQQQQ). The span at 1363–1372 (QRERDQEHKQ) shows a compositional bias: basic and acidic residues. The span at 1374 to 1388 (AGSVAGSVGSATSAA) shows a compositional bias: low complexity. The span at 1396–1415 (SARTLSDSSTDTEGHCNQLQ) shows a compositional bias: polar residues. Residues S1401 and S1403 each carry the phosphoserine modification. The segment covering 1427–1438 (GGSGGGGAGSEQ) has biased composition (gly residues). The segment covering 1563-1580 (TQQQQQQHQAPPKTQKPQ) has biased composition (low complexity).

It localises to the cytoplasm. Its subcellular location is the cell membrane. The protein localises to the apical cell membrane. GTPase-activating protein, which acts as a negative regulator for some members of the Ras family. Probably decreases their signaling activity by stimulating their intrinsic GTPase activity, thereby lowering the levels of the GTP-bound active form. Functions with DE-cadherin (shg) to promote embryonic border cell (BC) migration and adhesion by regulating the distribution of actin protrusions in BCs. Promotes shg-mediated adhesion at the BC interfaces and likely maintains BC cluster adhesion during BC detachment from the follicular epithelium and subsequent BC migration. Also required for restricting the development of actin-rich protrusions to the front of migrating BC clusters thus ensuring unidirectional BC migration. Possibly functions by suppressing Rac1 signaling in non-leading BCs, thus limiting its activity to leading BCs where it initiates localized actin cytoskeleton remodeling to produce the polarized protrusions. The sequence is that of Ras GTPase-activating protein raskol from Drosophila melanogaster (Fruit fly).